A 470-amino-acid chain; its full sequence is Poly(A) polymerase catalytic subunit (470 aa).

Residues Asp-192 and Asp-194 contribute to the active site.

Belongs to the poxviridae poly(A) polymerase catalytic subunit family. In terms of assembly, heterodimer of a large (catalytic) subunit and a small (regulatory) subunit.

It catalyses the reaction RNA(n) + ATP = RNA(n)-3'-adenine ribonucleotide + diphosphate. Its function is as follows. Polymerase that creates the 3'-poly(A) tail of mRNA's. This chain is Poly(A) polymerase catalytic subunit (PAPL), found in Myxoma virus (strain Lausanne) (MYXV).